We begin with the raw amino-acid sequence, 71 residues long: Exodeoxyribonuclease 7 small subunit (71 aa).

It belongs to the XseB family. As to quaternary structure, heterooligomer composed of large and small subunits.

The protein resides in the cytoplasm. It catalyses the reaction Exonucleolytic cleavage in either 5'- to 3'- or 3'- to 5'-direction to yield nucleoside 5'-phosphates.. In terms of biological role, bidirectionally degrades single-stranded DNA into large acid-insoluble oligonucleotides, which are then degraded further into small acid-soluble oligonucleotides. The protein is Exodeoxyribonuclease 7 small subunit of Endomicrobium trichonymphae.